We begin with the raw amino-acid sequence, 561 residues long: Inner membrane ABC transporter ATP-binding protein YddA (561 aa).

Residues 1–3 (MIT) lie on the Cytoplasmic side of the membrane. The helical transmembrane segment at 4-24 (IPITLRMLIAKYLCLLKPFWL) threads the bilayer. Residues 25 to 31 (RKNNKTS) are Periplasmic-facing. A helical membrane pass occupies residues 32-52 (VLLIIIILAMILGVVKIQVWL). Residues 35–337 (IIIILAMILG…FIYKYDELAE (303 aa)) enclose the ABC transmembrane type-1 domain. Residues 53–70 (NDWNNDFFNALSQKETDK) are Cytoplasmic-facing. The helical transmembrane segment at 71–91 (LWQLVLWFPALLGIFVLISVN) threads the bilayer. Topologically, residues 92-151 (KTWLIKLLTIRWREWLTDYYLNRWFADKNYYFTQIYGEHKNTDNPDQRIAEDILLLISKT) are periplasmic. A helical membrane pass occupies residues 152 to 172 (LSLSFGFIQSLSMLITFTVIL). Over 173 to 187 (WESAGTLSFTVGGTE) the chain is Cytoplasmic. The chain crosses the membrane as a helical span at residues 188–208 (WNIQGYMVYTVVLIVIGGTLF). The Periplasmic segment spans residues 209-290 (THKVGKRIRP…WQNIYSRSLS (82 aa)). The helical transmembrane segment at 291–311 (VLPYFLLLPQFISGQINLGGL) threads the bilayer. Topologically, residues 312–561 (MKSRQAFMLV…DDICDISAVL (250 aa)) are cytoplasmic. The region spanning 367–561 (VQVADASIRT…DDICDISAVL (195 aa)) is the ABC transporter domain. 400 to 407 (GYSGAGKT) serves as a coordination point for ATP.

The protein belongs to the ABC transporter superfamily.

The protein localises to the cell inner membrane. This is Inner membrane ABC transporter ATP-binding protein YddA (yddA) from Escherichia coli (strain K12).